The primary structure comprises 117 residues: Large ribosomal subunit protein bL20 (117 aa).

Belongs to the bacterial ribosomal protein bL20 family.

Binds directly to 23S ribosomal RNA and is necessary for the in vitro assembly process of the 50S ribosomal subunit. It is not involved in the protein synthesizing functions of that subunit. In Actinobacillus succinogenes (strain ATCC 55618 / DSM 22257 / CCUG 43843 / 130Z), this protein is Large ribosomal subunit protein bL20.